We begin with the raw amino-acid sequence, 127 residues long: Fluoride-specific ion channel FluC (127 aa).

A run of 4 helical transmembrane segments spans residues 4–24, 35–55, 71–91, and 99–119; these read FTLLGFIALGGAFGACSRYLI, GFPYGTLTVNVIGSLLMGILM, IIGLGFLGALTTFSTFSMDNV, and FIKAGLNILLNVALSITACFI. Residues glycine 78 and threonine 81 each contribute to the Na(+) site.

The protein belongs to the fluoride channel Fluc/FEX (TC 1.A.43) family.

Its subcellular location is the cell inner membrane. The enzyme catalyses fluoride(in) = fluoride(out). With respect to regulation, na(+) is not transported, but it plays an essential structural role and its presence is essential for fluoride channel function. In terms of biological role, fluoride-specific ion channel. Important for reducing fluoride concentration in the cell, thus reducing its toxicity. In Photobacterium profundum (strain SS9), this protein is Fluoride-specific ion channel FluC.